The primary structure comprises 597 residues: Aspartate--tRNA ligase (597 aa).

Glutamate 171 lines the L-aspartate pocket. The segment at 195 to 198 is aspartate; that stretch reads QLFK. An L-aspartate-binding site is contributed by arginine 217. Residues 217-219 and glutamine 226 each bind ATP; that span reads RDE. Histidine 448 provides a ligand contact to L-aspartate. ATP is bound at residue glutamate 482. Arginine 489 lines the L-aspartate pocket. 534-537 contacts ATP; that stretch reads GLDR.

Belongs to the class-II aminoacyl-tRNA synthetase family. Type 1 subfamily. In terms of assembly, homodimer.

Its subcellular location is the cytoplasm. The enzyme catalyses tRNA(Asp) + L-aspartate + ATP = L-aspartyl-tRNA(Asp) + AMP + diphosphate. Its function is as follows. Catalyzes the attachment of L-aspartate to tRNA(Asp) in a two-step reaction: L-aspartate is first activated by ATP to form Asp-AMP and then transferred to the acceptor end of tRNA(Asp). The protein is Aspartate--tRNA ligase of Photobacterium profundum (strain SS9).